The sequence spans 778 residues: General transcription and DNA repair factor IIH helicase subunit XPD/RAD3 (778 aa).

In terms of domain architecture, Helicase ATP-binding spans 7–285; it reads DLPVLFPYPK…KVDSQKLQDE (279 aa). 42–49 contributes to the ATP binding site; the sequence is MPSGTGKT. Positions 115, 133, 156, and 191 each coordinate [4Fe-4S] cluster. Positions 235–238 match the DEAH box motif; the sequence is DEAH. A compositionally biased stretch (basic and acidic residues) spans 750-765; sequence SRKDQGGFIENENKEG. The segment at 750 to 778 is disordered; it reads SRKDQGGFIENENKEGEQDEDEDEDIEMQ. A compositionally biased stretch (acidic residues) spans 766–778; it reads EQDEDEDEDIEMQ.

The protein belongs to the helicase family. RAD3/XPD subfamily. In terms of assembly, component of the 7-subunit TFIIH core complex composed of XPB/SSL2, XPD/RAD3, SSL1, TFB1, TFB2, TFB4 and TFB5, which is active in NER. The core complex associates with the 3-subunit CTD-kinase module TFIIK composed of CCL1, KIN28 and TFB3 to form the 10-subunit holoenzyme (holo-TFIIH) active in transcription. An additionnal subunit, TFB6, plays a role in the dissociation of the SSL2 helicase from TFIIH after transcription initiation. Requires [4Fe-4S] cluster as cofactor. Mg(2+) serves as cofactor.

The protein localises to the nucleus. It catalyses the reaction Couples ATP hydrolysis with the unwinding of duplex DNA at the replication fork by translocating in the 5'-3' direction. This creates two antiparallel DNA single strands (ssDNA). The leading ssDNA polymer is the template for DNA polymerase III holoenzyme which synthesizes a continuous strand.. The enzyme catalyses ATP + H2O = ADP + phosphate + H(+). ATP-dependent 5'-3' DNA helicase. Component of the general transcription and DNA repair factor IIH (TFIIH) core complex, which is involved in general and transcription-coupled nucleotide excision repair (NER) of damaged DNA and, when complexed to TFIIK, in RNA transcription by RNA polymerase II. In NER, TFIIH acts by opening DNA around the lesion to allow the excision of the damaged oligonucleotide and its replacement by a new DNA fragment. The ATP-dependent helicase activity of XPD/RAD3 is required for DNA opening. In transcription, TFIIH has an essential role in transcription initiation. When the pre-initiation complex (PIC) has been established, TFIIH is required for promoter opening and promoter escape. Phosphorylation of the C-terminal tail (CTD) of the largest subunit of RNA polymerase II by the kinase module TFIIK controls the initiation of transcription. XPD/RAD3 acts by forming a bridge between TFIIK and the core-TFIIH complex. Involved in the maintenance of the fidelity of DNA replication. Has single-stranded DNA-dependent ATPase activity. 5'-3' DNA helicase activity requires ATP (dATP partially substitutes), will unwind over 800 bp dsDNA. Able to unwind an RNA:DNA hybrid. This is General transcription and DNA repair factor IIH helicase subunit XPD/RAD3 from Saccharomyces cerevisiae (strain ATCC 204508 / S288c) (Baker's yeast).